A 1235-amino-acid chain; its full sequence is Bromodomain-containing protein 8 (1235 aa).

K85 is modified (N6-acetyllysine). Residues 97–171 (VRKLTAERVE…ATDAAYQARQ (75 aa)) adopt a coiled-coil conformation. At R124 the chain carries Phosphothreonine. Phosphoserine is present on residues L128 and D144. Positions 186–205 (RSPIDSASPGGDYPLGDLTP) are disordered. A264 is subject to Phosphothreonine. 4 positions are modified to phosphoserine: S268, S284, S383, and S387. A Glycyl lysine isopeptide (Lys-Gly) (interchain with G-Cter in SUMO2) cross-link involves residue K469. K481 carries the post-translational modification N6-acetyllysine; alternate. Residue K481 forms a Glycyl lysine isopeptide (Lys-Gly) (interchain with G-Cter in SUMO1); alternate linkage. K481 is covalently cross-linked (Glycyl lysine isopeptide (Lys-Gly) (interchain with G-Cter in SUMO2); alternate). Residues K509 and K575 each participate in a glycyl lysine isopeptide (Lys-Gly) (interchain with G-Cter in SUMO2) cross-link. Residues 551 to 597 (TAAGEIVEADVAIGKGDETPLTNVKTEASPESMLSPSHGSNPIEDPL) form a disordered region. S579 is subject to Phosphoserine. A Glycyl lysine isopeptide (Lys-Gly) (interchain with G-Cter in SUMO2) cross-link involves residue K612. 3 positions are modified to phosphoserine: S621, S637, and S641. A disordered region spans residues 621-672 (SQIKDAPGEDEEEDGVSEAASLEEPKEEDQGEGYLSEMDNEPPVSESDDGFS). In terms of domain architecture, Bromo 1 spans 706 to 811 (IQAQKIWKKA…RDVLEQIQQF (106 aa)). 3 disordered regions span residues 827 to 848 (AKSLRGRDSTRKQDASEKDSVP), 903 to 940 (ETEDPEAEELEESSPEREPSELLVGDGGSEESQEAARK), and 966 to 999 (ESSEGCCPPSGTRQEGREIKASEGERELCRETEE). The span at 831 to 846 (RGRDSTRKQDASEKDS) shows a compositional bias: basic and acidic residues. A compositionally biased stretch (acidic residues) spans 905-915 (EDPEAEELEES). The residue at position 924 (L924) is a Phosphoserine. The span at 979–999 (QEGREIKASEGERELCRETEE) shows a compositional bias: basic and acidic residues. Positions 1099 to 1207 (DDPVQDHLLF…QEVLEQIQVL (109 aa)) constitute a Bromo 2 domain.

Component of the NuA4 histone acetyltransferase complex which contains the catalytic subunit KAT5/TIP60 and the subunits EP400, TRRAP/PAF400, BRD8/SMAP, EPC1, DMAP1/DNMAP1, RUVBL1/TIP49, RUVBL2, ING3, actin, ACTL6A/BAF53A, MORF4L1/MRG15, MORF4L2/MRGX, MRGBP, YEATS4/GAS41, VPS72/YL1 and MEAF6. The NuA4 complex interacts with MYC and the adenovirus E1A protein. Component of a NuA4-related complex which contains EP400, TRRAP/PAF400, SRCAP, BRD8/SMAP, EPC1, DMAP1/DNMAP1, RUVBL1/TIP49, RUVBL2, actin, ACTL6A/BAF53A, VPS72 and YEATS4/GAS41. BRD8 isoform 2 interacts with RXRA/NR2B1 and THRB/ERBA2. Component of a SWR1-like complex. Expressed in adipose tissue, brain, heart, kidney, liver, lung, pancreas, placenta and skeletal muscle.

It localises to the nucleus. In terms of biological role, may act as a coactivator during transcriptional activation by hormone-activated nuclear receptors (NR). Isoform 2 stimulates transcriptional activation by AR/DHTR, ESR1/NR3A1, RXRA/NR2B1 and THRB/ERBA2. At least isoform 1 and isoform 2 are components of the NuA4 histone acetyltransferase (HAT) complex which is involved in transcriptional activation of select genes principally by acetylation of nucleosomal histones H4 and H2A. This modification may both alter nucleosome - DNA interactions and promote interaction of the modified histones with other proteins which positively regulate transcription. This complex may be required for the activation of transcriptional programs associated with oncogene and proto-oncogene mediated growth induction, tumor suppressor mediated growth arrest and replicative senescence, apoptosis, and DNA repair. NuA4 may also play a direct role in DNA repair when recruited to sites of DNA damage. Component of a SWR1-like complex that specifically mediates the removal of histone H2A.Z/H2AZ1 from the nucleosome. The polypeptide is Bromodomain-containing protein 8 (BRD8) (Homo sapiens (Human)).